The chain runs to 161 residues: Protein-export protein SecB (161 aa).

It belongs to the SecB family. As to quaternary structure, homotetramer, a dimer of dimers. One homotetramer interacts with 1 SecA dimer.

The protein localises to the cytoplasm. In terms of biological role, one of the proteins required for the normal export of preproteins out of the cell cytoplasm. It is a molecular chaperone that binds to a subset of precursor proteins, maintaining them in a translocation-competent state. It also specifically binds to its receptor SecA. The chain is Protein-export protein SecB from Pseudomonas fluorescens (strain Pf0-1).